Here is a 346-residue protein sequence, read N- to C-terminus: Uroporphyrinogen decarboxylase (346 aa).

Substrate-binding positions include 26–30 (RQAGR), aspartate 76, tyrosine 153, serine 208, and histidine 323.

This sequence belongs to the uroporphyrinogen decarboxylase family. Homodimer.

The protein resides in the cytoplasm. The catalysed reaction is uroporphyrinogen III + 4 H(+) = coproporphyrinogen III + 4 CO2. It functions in the pathway porphyrin-containing compound metabolism; protoporphyrin-IX biosynthesis; coproporphyrinogen-III from 5-aminolevulinate: step 4/4. Its function is as follows. Catalyzes the decarboxylation of four acetate groups of uroporphyrinogen-III to yield coproporphyrinogen-III. The protein is Uroporphyrinogen decarboxylase of Prochlorococcus marinus (strain MIT 9215).